Consider the following 210-residue polypeptide: ATP-dependent Clp protease proteolytic subunit (210 aa).

Residue S111 is the Nucleophile of the active site. H136 is a catalytic residue.

It belongs to the peptidase S14 family. In terms of assembly, fourteen ClpP subunits assemble into 2 heptameric rings which stack back to back to give a disk-like structure with a central cavity, resembling the structure of eukaryotic proteasomes.

It is found in the cytoplasm. It carries out the reaction Hydrolysis of proteins to small peptides in the presence of ATP and magnesium. alpha-casein is the usual test substrate. In the absence of ATP, only oligopeptides shorter than five residues are hydrolyzed (such as succinyl-Leu-Tyr-|-NHMec, and Leu-Tyr-Leu-|-Tyr-Trp, in which cleavage of the -Tyr-|-Leu- and -Tyr-|-Trp bonds also occurs).. Cleaves peptides in various proteins in a process that requires ATP hydrolysis. Has a chymotrypsin-like activity. Plays a major role in the degradation of misfolded proteins. This is ATP-dependent Clp protease proteolytic subunit from Halorhodospira halophila (strain DSM 244 / SL1) (Ectothiorhodospira halophila (strain DSM 244 / SL1)).